Consider the following 472-residue polypeptide: F420-non-reducing hydrogenase subunit A (472 aa).

Residues C61, C64, C442, and C445 each contribute to the Ni(2+) site.

Belongs to the [NiFe]/[NiFeSe] hydrogenase large subunit family. As to quaternary structure, the F420-non-reducing hydrogenase is composed of three subunits; MvhA, MvhD and MvhG. It forms a complex with the heterodisulfide reductase (hdr). It depends on Ni(2+) as a cofactor.

Functionally, part of a complex that provides reducing equivalents for heterodisulfide reductase. This is F420-non-reducing hydrogenase subunit A (mvhA) from Methanothermobacter thermautotrophicus (strain ATCC 29096 / DSM 1053 / JCM 10044 / NBRC 100330 / Delta H) (Methanobacterium thermoautotrophicum).